The primary structure comprises 1612 residues: uncharacterized protein (1612 aa).

The stretch at 23–52 forms a coiled coil; sequence ENKNIEMTTLKDKKEMKNENLSKINVKKEN. Residues 46–93 are compositionally biased toward basic and acidic residues; it reads INVKKENHDKNHDKNHDKNHDKNHDKNHDKNHDKNHDKNHDKNHDKNH. 2 disordered regions span residues 46–94 and 369–400; these read INVK…KNHV and EDDNKSDNPLYSNNNTLKEQNTSTPLPSHEIQ. Residues 375-394 show a composition bias toward polar residues; that stretch reads DNPLYSNNNTLKEQNTSTPL. A helical membrane pass occupies residues 479 to 499; the sequence is FIVTLSEICLILTPHYVNIIN. 4 disordered regions span residues 698–777, 992–1037, 1091–1157, and 1257–1291; these read TSLT…EKKL, NELD…KNDP, SGKS…RNMS, and NQTTNNNTYNNQTSNHMNENLHTDESSKSNNNQDK. A compositionally biased stretch (basic and acidic residues) spans 708 to 777; sequence KNDEIKKTGE…KKKTGEEKKL (70 aa). 3 stretches are compositionally biased toward low complexity: residues 996-1028, 1102-1140, and 1257-1271; these read NNNNKNNNNNKNNNNNKNNNNNNNNNNNNNNNN, SNNNNNVNNMNNNMNNNMNNNMNNHMNSNNNVVDSNSTN, and NQTTNNNTYNNQTSN. Coiled-coil stretches lie at residues 1338-1362, 1444-1469, and 1553-1601; these read YCNNKNKNKNKNKNKNKNMEQINNK, SNKKILIEKLIDKLDDYKKKINIDND, and NMED…KFLT. Residues 1554 to 1566 show a composition bias toward basic and acidic residues; the sequence is MEDEKNEKLNDKE. Positions 1554-1612 are disordered; that stretch reads MEDEKNEKLNDKEGEYEDVTENLNEQEAEEEAEEEAEEEEEEEDKFLTPEHLPINVEIK. Positions 1567 to 1597 are enriched in acidic residues; that stretch reads GEYEDVTENLNEQEAEEEAEEEAEEEEEEED.

Its subcellular location is the membrane. This is an uncharacterized protein from Plasmodium falciparum (isolate 3D7).